We begin with the raw amino-acid sequence, 387 residues long: Phosphoglycerate kinase (387 aa).

Residues 21–23 (DLN), Arg-36, 59–62 (HLGR), Arg-113, and Arg-146 contribute to the substrate site. Residues Lys-197, Glu-314, and 340–343 (GGDT) each bind ATP.

It belongs to the phosphoglycerate kinase family. Monomer.

The protein localises to the cytoplasm. The catalysed reaction is (2R)-3-phosphoglycerate + ATP = (2R)-3-phospho-glyceroyl phosphate + ADP. It functions in the pathway carbohydrate degradation; glycolysis; pyruvate from D-glyceraldehyde 3-phosphate: step 2/5. In Pseudomonas paraeruginosa (strain DSM 24068 / PA7) (Pseudomonas aeruginosa (strain PA7)), this protein is Phosphoglycerate kinase.